The sequence spans 320 residues: Cytochrome f (320 aa).

A signal peptide spans 1–35 (MQTRNNFSWIKEQITRSISVSLMIYIITRASISNA). The heme site is built by Y36, C56, C59, and H60. The helical transmembrane segment at 286–306 (VQGLLFFLASVILAQIFLVLK) threads the bilayer.

The protein belongs to the cytochrome f family. The 4 large subunits of the cytochrome b6-f complex are cytochrome b6, subunit IV (17 kDa polypeptide, petD), cytochrome f and the Rieske protein, while the 4 small subunits are PetG, PetL, PetM and PetN. The complex functions as a dimer. Requires heme as cofactor.

It is found in the plastid. It localises to the chloroplast thylakoid membrane. Component of the cytochrome b6-f complex, which mediates electron transfer between photosystem II (PSII) and photosystem I (PSI), cyclic electron flow around PSI, and state transitions. This is Cytochrome f from Lactuca sativa (Garden lettuce).